Here is a 157-residue protein sequence, read N- to C-terminus: Acetyltransferase PseH (157 aa).

The N-acetyltransferase domain maps to 5–152 (KNFAELNSQE…YYVCLKQSHC (148 aa)).

Catalyzes the third step in the biosynthesis of pseudaminic acid, a sialic-acid-like sugar that is used to modify flagellin. Mediates N-4 acetylation of UDP-4-amino-4,6-dideoxy-beta-L-AltNAc to form UDP-2,4-diacetamido-2,4,6-trideoxy-beta-L-altropyranose. This Campylobacter jejuni subsp. jejuni serotype O:2 (strain ATCC 700819 / NCTC 11168) protein is Acetyltransferase PseH (pseH).